Reading from the N-terminus, the 504-residue chain is L-carnitine/gamma-butyrobetaine antiporter (504 aa).

12 helical membrane-spanning segments follow: residues 10–30, 51–71, 92–112, 143–163, 195–215, 231–251, 263–283, 316–336, 347–367, 398–418, 446–466, and 475–495; these read IEPK…WLTV, WGWA…WLVF, IFMM…SIEI, GPLP…FFFV, FYLV…TPLV, LDAI…ACGL, SYLS…SFIM, WTVF…IFLA, LCFG…TVLG, WAAL…CFIA, LLVR…LLAL, and AIIA…LSFI.

The protein belongs to the BCCT transporter (TC 2.A.15) family. CaiT subfamily. As to quaternary structure, homotrimer.

The protein localises to the cell inner membrane. The catalysed reaction is 4-(trimethylamino)butanoate(in) + (R)-carnitine(out) = 4-(trimethylamino)butanoate(out) + (R)-carnitine(in). It functions in the pathway amine and polyamine metabolism; carnitine metabolism. Functionally, catalyzes the exchange of L-carnitine for gamma-butyrobetaine. The polypeptide is L-carnitine/gamma-butyrobetaine antiporter (Escherichia coli O81 (strain ED1a)).